The sequence spans 101 residues: MGAISQERLLKVILAPVISEKSTRVADKLNQVVFRVLPDATKQEIGAAVASLFKVEVAGVQVLNVKGKVKRSGRVMGRRDSWKKAYVTLKPGQDIDFASGQ.

The protein belongs to the universal ribosomal protein uL23 family. Part of the 50S ribosomal subunit. Contacts protein L29, and trigger factor when it is bound to the ribosome.

One of the early assembly proteins it binds 23S rRNA. One of the proteins that surrounds the polypeptide exit tunnel on the outside of the ribosome. Forms the main docking site for trigger factor binding to the ribosome. The protein is Large ribosomal subunit protein uL23 of Thiobacillus denitrificans (strain ATCC 25259 / T1).